The following is a 256-amino-acid chain: MRKQIVELFLIILAVLFIREYIAQAYTIPSASMEPTLLVGDFILVNKLVYSLSEPMRGDMIVFKYPKNPDIDFIKRIIARGGDTVEFFPYYDEKNNVLIYKVAVNGKLYELTYEGEKNYSYDCYQYREKLYREDGEVIQHSVCFRNTLLKVPGMVYNAISSDLCLKYNEDGFCVKFVVPEGYYFVMGDNRDNSQDSRFWGFVPRENIEGKAFVIYYSGKVPSLTPEEANPLTAVRQIIYALLNPRPSRIGKPLIDK.

Catalysis depends on residues serine 32 and lysine 75.

It belongs to the peptidase S26 family.

It carries out the reaction Cleavage of hydrophobic, N-terminal signal or leader sequences from secreted and periplasmic proteins.. In Aquifex aeolicus (strain VF5), this protein is Signal peptidase I (lepB).